Reading from the N-terminus, the 378-residue chain is Spermidine/putrescine import ATP-binding protein PotA (378 aa).

Residues 18-248 (VQLAGIRKCF…PKNLFVTGFI (231 aa)) enclose the ABC transporter domain. An ATP-binding site is contributed by 50–57 (GPSGCGKT).

This sequence belongs to the ABC transporter superfamily. Spermidine/putrescine importer (TC 3.A.1.11.1) family. In terms of assembly, the complex is composed of two ATP-binding proteins (PotA), two transmembrane proteins (PotB and PotC) and a solute-binding protein (PotD).

The protein localises to the cell inner membrane. The catalysed reaction is ATP + H2O + polyamine-[polyamine-binding protein]Side 1 = ADP + phosphate + polyamineSide 2 + [polyamine-binding protein]Side 1.. Part of the ABC transporter complex PotABCD involved in spermidine/putrescine import. Responsible for energy coupling to the transport system. The protein is Spermidine/putrescine import ATP-binding protein PotA of Shigella flexneri serotype 5b (strain 8401).